A 210-amino-acid chain; its full sequence is Redox-sensing transcriptional repressor Rex (210 aa).

A DNA-binding region (H-T-H motif) is located at residues Lys-17 to Phe-56. Position 91-96 (Gly-91–Gly-96) interacts with NAD(+).

The protein belongs to the transcriptional regulatory Rex family. Homodimer.

The protein resides in the cytoplasm. Its function is as follows. Modulates transcription in response to changes in cellular NADH/NAD(+) redox state. The sequence is that of Redox-sensing transcriptional repressor Rex from Clostridium botulinum (strain ATCC 19397 / Type A).